Here is a 76-residue protein sequence, read N- to C-terminus: DNA-directed RNA polymerase subunit epsilon (76 aa).

This sequence belongs to the RNA polymerase subunit epsilon family. In terms of assembly, RNAP is composed of a core of 2 alpha, a beta and a beta' subunit. The core is associated with a delta subunit, and at least one of epsilon or omega. When a sigma factor is associated with the core the holoenzyme is formed, which can initiate transcription.

The enzyme catalyses RNA(n) + a ribonucleoside 5'-triphosphate = RNA(n+1) + diphosphate. Its function is as follows. A non-essential component of RNA polymerase (RNAP). This Streptococcus equi subsp. equi (strain 4047) protein is DNA-directed RNA polymerase subunit epsilon.